The following is a 562-amino-acid chain: Zinc finger protein 579 (562 aa).

Residues 1-11 (MDPQPPPPAQG) are compositionally biased toward pro residues. Residues 1–45 (MDPQPPPPAQGSPPHRDRGRGRGRGRGRGRGRGRGRGGAGAPRAP) form a disordered region. The segment covering 17-35 (DRGRGRGRGRGRGRGRGRG) has biased composition (basic residues). C2H2-type zinc fingers lie at residues 46 to 68 (LPCPTCGRLFRFPYYLSRHRLSH), 74 to 96 (HACPLCPKAFRRPAHLSRHLRGH), and 102 to 125 (LRCAACPRTFPEPAQLRRHLAQEH). R94 carries the post-translational modification Omega-N-methylarginine. Disordered regions lie at residues 120–154 (HLAQEHAGSEVDLSTQRAVKEEPEASWGPQDEGVE) and 166–199 (EEATTQWPAGDSAPAAVPTSTDPRESEAKEAEAG). Positions 187-197 (DPRESEAKEAE) are enriched in basic and acidic residues. S191 carries the phosphoserine modification. 2 consecutive C2H2-type zinc fingers follow at residues 267 to 289 (HQCSICLKAFARPWSLSRHRLVH) and 295 to 317 (FVCPDCGLAFRLASYLRQHRRVH). The segment at 321 to 377 (SLLAPLPGAGKKDDKASGGRNSGKGPEGGEGAECGGASEGGEGGHNGGDATPARPPA) is disordered. A compositionally biased stretch (gly residues) spans 340 to 367 (RNSGKGPEGGEGAECGGASEGGEGGHNG). 3 C2H2-type zinc fingers span residues 382-404 (FWCPECGKGFRRRAHLRQHGVTH), 410-432 (FQCVRCQREFKRLADLARHAQVH), and 439-461 (HPCPRCPRRFSRAYSLLRHQRCH). S486 is modified (phosphoserine). The interval 505–530 (AHIKEEPPSPGTPPQSPPAPPVFLSA) is disordered. The segment covering 512–525 (PSPGTPPQSPPAPP) has biased composition (pro residues).

It belongs to the krueppel C2H2-type zinc-finger protein family.

It is found in the nucleus. Its function is as follows. May be involved in transcriptional regulation. This Mus musculus (Mouse) protein is Zinc finger protein 579 (Znf579).